Here is a 298-residue protein sequence, read N- to C-terminus: Putative GATA zinc finger domain-containing protein 25 (298 aa).

A coiled-coil region spans residues 4–37 (DNKNKNDNYQESIQRIVNQRNNLLKEIENKINQQ). Residues 148-227 (QQQLQQSHTK…RGRPSKPKPE (80 aa)) are disordered. The span at 183 to 202 (EENEENEENEENEENEENEE) shows a compositional bias: acidic residues. A compositionally biased stretch (basic and acidic residues) spans 203-212 (NKEKDVEVAK). Positions 214 to 223 (NKPKRGRPSK) are enriched in basic residues. The GATA-type; degenerate zinc-finger motif lies at 229–256 (CFRYGTRSCPYWRKNVIKGELVDVCNAC).

In Dictyostelium discoideum (Social amoeba), this protein is Putative GATA zinc finger domain-containing protein 25 (gtaY).